We begin with the raw amino-acid sequence, 479 residues long: ATP synthase subunit beta (479 aa).

162 to 169 (GGAGVGKT) lines the ATP pocket.

This sequence belongs to the ATPase alpha/beta chains family. In terms of assembly, F-type ATPases have 2 components, CF(1) - the catalytic core - and CF(0) - the membrane proton channel. CF(1) has five subunits: alpha(3), beta(3), gamma(1), delta(1), epsilon(1). CF(0) has three main subunits: a(1), b(2) and c(9-12). The alpha and beta chains form an alternating ring which encloses part of the gamma chain. CF(1) is attached to CF(0) by a central stalk formed by the gamma and epsilon chains, while a peripheral stalk is formed by the delta and b chains.

The protein localises to the cell membrane. The catalysed reaction is ATP + H2O + 4 H(+)(in) = ADP + phosphate + 5 H(+)(out). Its function is as follows. Produces ATP from ADP in the presence of a proton gradient across the membrane. The catalytic sites are hosted primarily by the beta subunits. The chain is ATP synthase subunit beta from Mesoplasma florum (strain ATCC 33453 / NBRC 100688 / NCTC 11704 / L1) (Acholeplasma florum).